Consider the following 279-residue polypeptide: Putative ABC transporter ATP-binding protein CA_C1368 (279 aa).

An ABC transporter domain is found at 4 to 239; it reads ISINNVDYIY…KKVLRNINLR (236 aa). 37–44 contributes to the ATP binding site; the sequence is GPNGAGKS.

The protein belongs to the ABC transporter superfamily.

The protein resides in the cell membrane. In terms of biological role, probably part of an ABC transporter complex. Responsible for energy coupling to the transport system. This chain is Putative ABC transporter ATP-binding protein CA_C1368, found in Clostridium acetobutylicum (strain ATCC 824 / DSM 792 / JCM 1419 / IAM 19013 / LMG 5710 / NBRC 13948 / NRRL B-527 / VKM B-1787 / 2291 / W).